A 98-amino-acid polypeptide reads, in one-letter code: ATP-dependent Clp protease adapter protein ClpS (98 aa).

Belongs to the ClpS family. Binds to the N-terminal domain of the chaperone ClpA.

Its function is as follows. Involved in the modulation of the specificity of the ClpAP-mediated ATP-dependent protein degradation. This is ATP-dependent Clp protease adapter protein ClpS from Synechocystis sp. (strain ATCC 27184 / PCC 6803 / Kazusa).